A 297-amino-acid chain; its full sequence is MRIAVIGAGKWGSALHLALKENHNCFISSLHQRDLEDFVSIKEALECEYLIFALSSQGMRVWLKENFINKGQKILIASKGIEDQSCQFLDEIFLDFVPKENFCVLSGPSFAAEVMQKLPTALMISGINQELCKKFASFFPDFIKTYIDNDVRGAEICGAYKNVLAIASGISDGLKLGNNARAALISRGLIEMHRFGKFFGTKEETFLGLSGAGDLFLTATSVLSRNYRVGLKLAQNQKLDSILAELNEVAEGVKTAYAIEKLAKMKGIYTPIVNEVVAIFKGKSVQEATQNLLKQND.

NADPH contacts are provided by tryptophan 11, arginine 33, and lysine 79. Sn-glycerol 3-phosphate contacts are provided by lysine 79, glycine 107, and serine 109. Alanine 111 provides a ligand contact to NADPH. Sn-glycerol 3-phosphate contacts are provided by lysine 161, aspartate 214, serine 224, arginine 225, and asparagine 226. Lysine 161 (proton acceptor) is an active-site residue. Arginine 225 contacts NADPH. Valine 249 and glutamate 251 together coordinate NADPH.

This sequence belongs to the NAD-dependent glycerol-3-phosphate dehydrogenase family.

The protein resides in the cytoplasm. It carries out the reaction sn-glycerol 3-phosphate + NAD(+) = dihydroxyacetone phosphate + NADH + H(+). The catalysed reaction is sn-glycerol 3-phosphate + NADP(+) = dihydroxyacetone phosphate + NADPH + H(+). It functions in the pathway membrane lipid metabolism; glycerophospholipid metabolism. Functionally, catalyzes the reduction of the glycolytic intermediate dihydroxyacetone phosphate (DHAP) to sn-glycerol 3-phosphate (G3P), the key precursor for phospholipid synthesis. This chain is Glycerol-3-phosphate dehydrogenase [NAD(P)+], found in Campylobacter jejuni subsp. jejuni serotype O:23/36 (strain 81-176).